The following is an 868-amino-acid chain: Probable mixed-linked glucan synthase 3 (868 aa).

The disordered stretch occupies residues 36-68 (ERKAAGGGGGGAKGKHWAAADKGERRAAKECGG). Residues 53–68 (AAADKGERRAAKECGG) show a composition bias toward basic and acidic residues. The next 2 membrane-spanning stretches (helical) occupy residues 86–106 (LLHPYRALIFARLIAVLLFFG) and 116–136 (IMWFWTMSVAGDVWFGFSWLL). Asp-211 is a catalytic residue. Residues Asp-412 and Asp-414 each coordinate substrate. The active site involves Asp-573. Helical transmembrane passes span 649 to 669 (IYPVTSLFILLYAISPVMWLI), 686 to 706 (LLVIILMIHMIGWLEIKWAGI), 717 to 737 (FFMIGSTSAYPTAVLHMVVNL), 771 to 791 (MLIPTMVVLVANIGAIGVAIG), 810 to 830 (MGLLFNMWVMFLLYPFALAIM), and 838 to 858 (IILVVLLPIIFVIVALVYVAT).

The protein belongs to the glycosyltransferase 2 family. Plant cellulose synthase-like F subfamily.

It localises to the golgi apparatus membrane. In terms of biological role, may catalyze both beta-1,3 and beta-1,4 glycosidic linkage on beta-D-glucan. Essential for (1,3;1,4)-beta-D-glucans synthesis in grasses and cereals (Poaceae). The mixed-linked glucans (which are not present in walls of dicotyledons or most other monocotyledonous plants) are particularly important constituents of the walls of the starchy endosperm and aleurone cells of cereal grains such as oats, wheat, rice and barley. They can account for up to 70% by weight of the wall. The polypeptide is Probable mixed-linked glucan synthase 3 (CSLF3) (Oryza sativa subsp. japonica (Rice)).